A 661-amino-acid chain; its full sequence is uncharacterized protein (661 aa).

The disordered stretch occupies residues L25–N52. Over residues T42–N52 the composition is skewed to polar residues. The 52-residue stretch at S246–D297 folds into the SANT domain. 4 disordered regions span residues T306–G329, Y478–E499, P548–L570, and R604–Q633. The span at T308–K328 shows a compositional bias: basic residues. A compositionally biased stretch (basic and acidic residues) spans Y478–S487. Residues R604–T617 are compositionally biased toward basic and acidic residues.

It localises to the nucleus. This is an uncharacterized protein from Schizosaccharomyces pombe (strain 972 / ATCC 24843) (Fission yeast).